Consider the following 472-residue polypeptide: Squamosa promoter-binding-like protein 18 (472 aa).

Positions 89–110 (AKVPPSTSTLKRPRGGGGGGGG) are disordered. The SBP-type zinc finger occupies 112-189 (CPSCAVDGCK…DGHNRRRRKP (78 aa)). Residues C115, C120, C137, H140, C156, C159, H163, and C175 each contribute to the Zn(2+) site. A Bipartite nuclear localization signal motif is present at residues 172–188 (KRSCRKRLDGHNRRRRK). Disordered stretches follow at residues 179-218 (LDGHNRRRRKPQADSMSSGSFMTSQQGTRFASFTPPRPEP), 233-261 (SHHHHPHPVMTSRQPHFVGSPSSATTAAF), and 358-381 (SVDVSRMVQPSPAAAAGAEHHHHH). Residues 192-209 (DSMSSGSFMTSQQGTRFA) show a composition bias toward polar residues. Residues 252–261 (SPSSATTAAF) show a composition bias toward low complexity.

In terms of tissue distribution, expressed in young panicles.

Its subcellular location is the nucleus. Its function is as follows. Trans-acting factor that binds specifically to the consensus nucleotide sequence 5'-TNCGTACAA-3'. May be involved in panicle development. In Oryza sativa subsp. japonica (Rice), this protein is Squamosa promoter-binding-like protein 18 (SPL18).